Reading from the N-terminus, the 440-residue chain is L-seryl-tRNA(Sec) selenium transferase (440 aa).

Lysine 282 is modified (N6-(pyridoxal phosphate)lysine).

It belongs to the SelA family. The cofactor is pyridoxal 5'-phosphate.

The protein resides in the cytoplasm. The catalysed reaction is L-seryl-tRNA(Sec) + selenophosphate + H(+) = L-selenocysteinyl-tRNA(Sec) + phosphate. It participates in aminoacyl-tRNA biosynthesis; selenocysteinyl-tRNA(Sec) biosynthesis; selenocysteinyl-tRNA(Sec) from L-seryl-tRNA(Sec) (bacterial route): step 1/1. In terms of biological role, converts seryl-tRNA(Sec) to selenocysteinyl-tRNA(Sec) required for selenoprotein biosynthesis. The sequence is that of L-seryl-tRNA(Sec) selenium transferase from Campylobacter jejuni subsp. doylei (strain ATCC BAA-1458 / RM4099 / 269.97).